The chain runs to 56 residues: MGFENIWFSHPRKYGQGSRSCRSCANKHGIIRKYGLNICRQCFREYASDIGFKKLD.

The Zn(2+) site is built by Cys21, Cys24, Cys39, and Cys42.

This sequence belongs to the universal ribosomal protein uS14 family. As to quaternary structure, component of the 40S small ribosomal subunit. Zn(2+) serves as cofactor.

The protein localises to the cytoplasm. It localises to the cytosol. Its subcellular location is the rough endoplasmic reticulum. The chain is Small ribosomal subunit protein uS14 (RpS29) from Lysiphlebus testaceipes (Greenbugs aphid parastoid).